Reading from the N-terminus, the 520-residue chain is Probable glycine dehydrogenase (decarboxylating) subunit 2 (520 aa).

Residues 1 to 29 (MWRQSRWNEPLITEMSRRGRRGALPPRPD) form a disordered region. At Lys-279 the chain carries N6-(pyridoxal phosphate)lysine.

This sequence belongs to the GcvP family. C-terminal subunit subfamily. As to quaternary structure, the glycine cleavage system is composed of four proteins: P, T, L and H. In this organism, the P 'protein' is a heterodimer of two subunits. Pyridoxal 5'-phosphate serves as cofactor.

The enzyme catalyses N(6)-[(R)-lipoyl]-L-lysyl-[glycine-cleavage complex H protein] + glycine + H(+) = N(6)-[(R)-S(8)-aminomethyldihydrolipoyl]-L-lysyl-[glycine-cleavage complex H protein] + CO2. Functionally, the glycine cleavage system catalyzes the degradation of glycine. The P protein binds the alpha-amino group of glycine through its pyridoxal phosphate cofactor; CO(2) is released and the remaining methylamine moiety is then transferred to the lipoamide cofactor of the H protein. This chain is Probable glycine dehydrogenase (decarboxylating) subunit 2, found in Aeropyrum pernix (strain ATCC 700893 / DSM 11879 / JCM 9820 / NBRC 100138 / K1).